Reading from the N-terminus, the 371-residue chain is Anhydro-N-acetylmuramic acid kinase (371 aa).

12–20 (GTVLDGNID) serves as a coordination point for ATP.

This sequence belongs to the anhydro-N-acetylmuramic acid kinase family.

The catalysed reaction is 1,6-anhydro-N-acetyl-beta-muramate + ATP + H2O = N-acetyl-D-muramate 6-phosphate + ADP + H(+). Its pathway is amino-sugar metabolism; 1,6-anhydro-N-acetylmuramate degradation. The protein operates within cell wall biogenesis; peptidoglycan recycling. Its function is as follows. Catalyzes the specific phosphorylation of 1,6-anhydro-N-acetylmuramic acid (anhMurNAc) with the simultaneous cleavage of the 1,6-anhydro ring, generating MurNAc-6-P. Is required for the utilization of anhMurNAc either imported from the medium or derived from its own cell wall murein, and thus plays a role in cell wall recycling. This is Anhydro-N-acetylmuramic acid kinase from Rhizobium rhizogenes (strain K84 / ATCC BAA-868) (Agrobacterium radiobacter).